Consider the following 119-residue polypeptide: MSIRTEKVASLLQQELGAILEKELPRSSALSTVVDVKVTADLGIARIYVSVIGTEEQRTAIMAWLHDETKYLRKLLSAKIRHHFRRIPEIEFFEDRIYERASRIEQLLREVRKAPEQHD.

Belongs to the RbfA family. As to quaternary structure, monomer. Binds 30S ribosomal subunits, but not 50S ribosomal subunits or 70S ribosomes.

The protein localises to the cytoplasm. One of several proteins that assist in the late maturation steps of the functional core of the 30S ribosomal subunit. Associates with free 30S ribosomal subunits (but not with 30S subunits that are part of 70S ribosomes or polysomes). Required for efficient processing of 16S rRNA. May interact with the 5'-terminal helix region of 16S rRNA. This is Ribosome-binding factor A from Chlorobium limicola (strain DSM 245 / NBRC 103803 / 6330).